We begin with the raw amino-acid sequence, 483 residues long: Essential nuclear protein 1 (483 aa).

Disordered regions lie at residues 1–21, 33–55, 67–123, and 171–200; these read MARA…LKDL, KKKL…GYID, KEQQ…EGDY, and ESQV…GLKS. Over residues 96–123 the composition is skewed to acidic residues; the sequence is YDDEDEDEDEDEEAFGEDISDFEPEGDY. A Phosphoserine; by ATM or ATR modification is found at Ser-172. Residues 174 to 183 show a composition bias toward acidic residues; sequence VEDMQDDEPL. Polar residues predominate over residues 185 to 198; that stretch reads NEQNTSRGNISSGL. Phosphoserine is present on residues Ser-190 and Ser-404.

It belongs to the bystin family.

Its subcellular location is the cytoplasm. It is found in the nucleus. It localises to the nucleolus. In terms of biological role, required for normal export of the pre-40S particles from the nucleus to the cytoplasm. Its subcellular location and association with pre-40S subunit shifts from mixed cytoplasm/nucleus to all nuclear in RPS19 disruptions, suggesting it acts after the ribosomal protein. The sequence is that of Essential nuclear protein 1 (ENP1) from Saccharomyces cerevisiae (strain ATCC 204508 / S288c) (Baker's yeast).